The sequence spans 464 residues: UDP-N-acetylmuramoylalanine--D-glutamate ligase (464 aa).

112 to 118 contributes to the ATP binding site; the sequence is GTDGKTT.

This sequence belongs to the MurCDEF family.

The protein localises to the cytoplasm. The enzyme catalyses UDP-N-acetyl-alpha-D-muramoyl-L-alanine + D-glutamate + ATP = UDP-N-acetyl-alpha-D-muramoyl-L-alanyl-D-glutamate + ADP + phosphate + H(+). It participates in cell wall biogenesis; peptidoglycan biosynthesis. Functionally, cell wall formation. Catalyzes the addition of glutamate to the nucleotide precursor UDP-N-acetylmuramoyl-L-alanine (UMA). In Chlorobium chlorochromatii (strain CaD3), this protein is UDP-N-acetylmuramoylalanine--D-glutamate ligase.